The following is a 538-amino-acid chain: Putative cysteine ligase BshC (538 aa).

A coiled-coil region spans residues 421–485 (VEEKFQEAKK…LERRHEVELN (65 aa)).

The protein belongs to the BshC family.

Functionally, involved in bacillithiol (BSH) biosynthesis. May catalyze the last step of the pathway, the addition of cysteine to glucosamine malate (GlcN-Mal) to generate BSH. In Bacillus cytotoxicus (strain DSM 22905 / CIP 110041 / 391-98 / NVH 391-98), this protein is Putative cysteine ligase BshC.